A 158-amino-acid polypeptide reads, in one-letter code: Nuclear cap-binding protein subunit 2 (158 aa).

Residues Y17, Y40, 109–113 (RADWD), 120–124 (RQYGR), and 130–131 (QV) contribute to the mRNA site. Residues 37-115 (CTLYVGNLSY…RVIRADWDAG (79 aa)) enclose the RRM domain. The interval 123 to 158 (GRGKHGGQVRDEYRKDYDPERGGYNRAIAQKGGDRQ) is disordered. Positions 130–145 (QVRDEYRKDYDPERGG) are enriched in basic and acidic residues.

The protein belongs to the RRM NCBP2 family. Component of the nuclear cap-binding complex (CBC), a heterodimer composed of ncbp-1 and ncbp-2 that interacts with m7GpppG-capped RNA.

It is found in the nucleus. In terms of biological role, component of the cap-binding complex (CBC), which binds co-transcriptionally to the 5' cap of pre-mRNAs and is involved in various processes such as pre-mRNA splicing and RNA-mediated gene silencing (RNAi). The CBC complex is involved in miRNA-mediated RNA interference and is required for primary microRNAs (miRNAs) processing. In the CBC complex, ncbp-2 recognizes and binds capped RNAs (m7GpppG-capped RNA) but requires ncbp-1 to stabilize the movement of its N-terminal loop and lock the CBC into a high affinity cap-binding state with the cap structure. In Caenorhabditis elegans, this protein is Nuclear cap-binding protein subunit 2 (ncbp-2).